Consider the following 173-residue polypeptide: ATP synthase subunit delta (173 aa).

The protein belongs to the ATPase delta chain family. F-type ATPases have 2 components, F(1) - the catalytic core - and F(0) - the membrane proton channel. F(1) has five subunits: alpha(3), beta(3), gamma(1), delta(1), epsilon(1). F(0) has three main subunits: a(1), b(2) and c(10-14). The alpha and beta chains form an alternating ring which encloses part of the gamma chain. F(1) is attached to F(0) by a central stalk formed by the gamma and epsilon chains, while a peripheral stalk is formed by the delta and b chains.

It is found in the cell inner membrane. Functionally, f(1)F(0) ATP synthase produces ATP from ADP in the presence of a proton or sodium gradient. F-type ATPases consist of two structural domains, F(1) containing the extramembraneous catalytic core and F(0) containing the membrane proton channel, linked together by a central stalk and a peripheral stalk. During catalysis, ATP synthesis in the catalytic domain of F(1) is coupled via a rotary mechanism of the central stalk subunits to proton translocation. In terms of biological role, this protein is part of the stalk that links CF(0) to CF(1). It either transmits conformational changes from CF(0) to CF(1) or is implicated in proton conduction. This is ATP synthase subunit delta from Campylobacter jejuni subsp. jejuni serotype O:2 (strain ATCC 700819 / NCTC 11168).